The following is an 827-amino-acid chain: Copper-transporting ATPase 2 (827 aa).

2 consecutive HMA domains span residues 15–80 (VSTN…YAPR) and 82–148 (ATEE…YELR). Positions 26, 29, 93, and 96 each coordinate Cu cation. The next 6 membrane-spanning stretches (helical) occupy residues 174–194 (VTIS…SHFI), 210–230 (NLYL…LRFF), 246–266 (SLVV…TFVP), 271–291 (SGTA…VLLG), 430–450 (GWFV…WYTF), and 458–478 (FALV…MGLA). The active-site 4-aspartylphosphate intermediate is the aspartate 515. Residues aspartate 714 and aspartate 718 each coordinate Mg(2+). Helical transmembrane passes span 771–793 (NLFW…LYPV) and 797–819 (LLSP…GNAL).

Belongs to the cation transport ATPase (P-type) (TC 3.A.3) family. Type IB subfamily.

Its subcellular location is the cell membrane. The catalysed reaction is Cu(2+)(in) + ATP + H2O = Cu(2+)(out) + ADP + phosphate + H(+). Its function is as follows. Involved in copper transport. The sequence is that of Copper-transporting ATPase 2 (actP2) from Rhizobium meliloti (strain 1021) (Ensifer meliloti).